We begin with the raw amino-acid sequence, 335 residues long: Fructose-1,6-bisphosphatase class 1 1 (335 aa).

Mg(2+)-binding residues include Glu-92, Asp-114, Leu-116, and Asp-117. Substrate is bound by residues 117–120 (DGSS), Asn-209, and Lys-275. Residue Glu-281 participates in Mg(2+) binding.

This sequence belongs to the FBPase class 1 family. In terms of assembly, homotetramer. Mg(2+) serves as cofactor.

It localises to the cytoplasm. The enzyme catalyses beta-D-fructose 1,6-bisphosphate + H2O = beta-D-fructose 6-phosphate + phosphate. The protein operates within carbohydrate biosynthesis; gluconeogenesis. This chain is Fructose-1,6-bisphosphatase class 1 1, found in Polaromonas naphthalenivorans (strain CJ2).